The sequence spans 181 residues: Aminoglycoside 2'-N-acetyltransferase (181 aa).

The 152-residue stretch at 11-162 (VHTADLDSET…DGTVFVLPID (152 aa)) folds into the N-acetyltransferase domain. Substrate-binding positions include aspartate 35 and 82–83 (EG). CoA-binding positions include 84–86 (VAV) and 91–96 (RGQRLV). Residues serine 117 and 151 to 152 (DD) contribute to the substrate site.

It belongs to the AAC(2')-I acetyltransferase family. Homodimer.

Catalyzes the coenzyme A-dependent acetylation of the 2' hydroxyl or amino group of a broad spectrum of aminoglycosides. It confers resistance to aminoglycosides. This chain is Aminoglycoside 2'-N-acetyltransferase (aac), found in Mycobacterium bovis (strain ATCC BAA-935 / AF2122/97).